The following is a 31-amino-acid chain: Cyclotide vibi-H (31 aa).

The cyclopeptide (Gly-Asn) cross-link spans 1–31 (GLLPCAESCVYIPCLTTVIGCSCKSKVCYKN). Cystine bridges form between cysteine 5–cysteine 21, cysteine 9–cysteine 23, and cysteine 14–cysteine 28.

Post-translationally, this is a cyclic peptide.

In terms of biological role, probably participates in a plant defense mechanism. Has cytotoxic activity, active against a human lymphoma cell line with an IC(50) of 1.6 uM. This is Cyclotide vibi-H from Viola biflora (Yellow wood violet).